The sequence spans 185 residues: Large ribosomal subunit protein uL22 (185 aa).

Belongs to the universal ribosomal protein uL22 family. Part of the 50S ribosomal subunit.

This protein binds specifically to 23S rRNA. It makes multiple contacts with different domains of the 23S rRNA in the assembled 50S subunit and ribosome. Functionally, the globular domain of the protein is located near the polypeptide exit tunnel on the outside of the subunit, while an extended beta-hairpin is found that lines the wall of the exit tunnel in the center of the 70S ribosome. The polypeptide is Large ribosomal subunit protein uL22 (Pyrobaculum islandicum (strain DSM 4184 / JCM 9189 / GEO3)).